Reading from the N-terminus, the 399-residue chain is Elongation factor Tu (399 aa).

The region spanning 10-207 (KPHVNVGTIG…ALDSYIPEPV (198 aa)) is the tr-type G domain. The segment at 19–26 (GHIDHGKT) is G1. Residue 19 to 26 (GHIDHGKT) participates in GTP binding. Thr26 contributes to the Mg(2+) binding site. The segment at 60–64 (GITIN) is G2. Residues 81–84 (DCPG) are G3. Residues 81-85 (DCPGH) and 136-139 (NKVD) each bind GTP. Positions 136-139 (NKVD) are G4. Residues 174-176 (SAL) form a G5 region.

This sequence belongs to the TRAFAC class translation factor GTPase superfamily. Classic translation factor GTPase family. EF-Tu/EF-1A subfamily. Monomer.

Its subcellular location is the cytoplasm. The enzyme catalyses GTP + H2O = GDP + phosphate + H(+). Its function is as follows. GTP hydrolase that promotes the GTP-dependent binding of aminoacyl-tRNA to the A-site of ribosomes during protein biosynthesis. The polypeptide is Elongation factor Tu (Pseudothermotoga lettingae (strain ATCC BAA-301 / DSM 14385 / NBRC 107922 / TMO) (Thermotoga lettingae)).